We begin with the raw amino-acid sequence, 486 residues long: MSSESPESVDDSTKVQATAEWDPLQAVRMHLPGAETFVGIMDPEPNLFLNDFSLVDAQQEHLSLSQDLEAALPASNPIHYLHDDLANGNGMNALLSSRVNFDLSELGEDEQVNRRDKMWARLHELSPHTQIQAVLGNAEVIRHHSHSDEEVPGSNPDRWDTTSVQLEQPLTNMYFQRDQQFVTQNGVVLCSMKEDTRKPEVDIARASWEALDGDEFDVDIVADMSQVREHDVTEHVPERDDIQETEVLVEGGDFYPAGEFSLLGVSAKIPEGEAYPKHDIAEDDTEYVHRTTYAAGHRLLMDDAFGSEEVGLVRAPFEAAQAHKDDDNGEVEMDIMHLDTWFNFVDDDLVVAHKELVENTTLDVYARTHGGEKPYTLERPDVNFGEYLREKGFEIVDVYDYVDPSHPDTDMALKAITNFLTVGPRKILPVRFSDDDDGVMKQFIDGIQEDYDVTVIPDGEGRKIINLRAGYGAIHCMTTPLRRTPE.

The active-site Amidino-cysteine intermediate is C476.

It belongs to the arginine deiminase family.

The protein resides in the cytoplasm. It carries out the reaction L-arginine + H2O = L-citrulline + NH4(+). The protein operates within amino-acid degradation; L-arginine degradation via ADI pathway; carbamoyl phosphate from L-arginine: step 1/2. Its function is as follows. Involved in the arginine deiminase pathway of fermentative arginine utilization. This is Arginine deiminase (arcA) from Halobacterium salinarum (strain ATCC 29341 / DSM 671 / R1).